Here is a 275-residue protein sequence, read N- to C-terminus: Trans-aconitate 2-methyltransferase (275 aa).

This sequence belongs to the methyltransferase superfamily. Tam family.

It is found in the cytoplasm. The enzyme catalyses trans-aconitate + S-adenosyl-L-methionine = (E)-3-(methoxycarbonyl)pent-2-enedioate + S-adenosyl-L-homocysteine. In terms of biological role, catalyzes the S-adenosylmethionine monomethyl esterification of trans-aconitate. This is Trans-aconitate 2-methyltransferase from Pseudomonas paraeruginosa (strain DSM 24068 / PA7) (Pseudomonas aeruginosa (strain PA7)).